The primary structure comprises 443 residues: Serine/threonine-protein phosphatase 2A 55 kDa regulatory subunit B beta isoform (443 aa).

WD repeat units lie at residues 22–61, 87–128, 171–209, 220–260, 279–317, 334–375, and 410–443; these read TEAD…KNQP, EIEE…KRPE, AHTY…RSFN, ELTE…LCDR, EIIS…RPIE, ENDC…DVTL, and DFSK…DKVN.

This sequence belongs to the phosphatase 2A regulatory subunit B family. PP2A consists of a common heterodimeric core enzyme, composed of a 36 kDa catalytic subunit (subunit C) and a 65 kDa constant regulatory subunit (PR65 or subunit A), that associates with a variety of regulatory subunits.

The protein resides in the cytoplasm. It is found in the cytoskeleton. Its subcellular location is the membrane. Its function is as follows. The B regulatory subunit might modulate substrate selectivity and catalytic activity, and might also direct the localization of the catalytic enzyme to a particular subcellular compartment. Negatively controls the initiation of oocyte maturation. This Xenopus tropicalis (Western clawed frog) protein is Serine/threonine-protein phosphatase 2A 55 kDa regulatory subunit B beta isoform (ppp2r2b).